The primary structure comprises 164 residues: Putative glutamine amidotransferase-like protein RP713 (164 aa).

Residues 39–164 (TIANPNSLFM…VITVKIIIYM (126 aa)) form the Glutamine amidotransferase type-1 domain.

This Rickettsia prowazekii (strain Madrid E) protein is Putative glutamine amidotransferase-like protein RP713.